The sequence spans 147 residues: Phospholipase A2-beta (147 aa).

Positions 1–28 (MMFRTSLMRFAAAFFAIVFVVLVGVARS) are cleaved as a signal peptide. 6 disulfide bridges follow: Cys-31–Cys-58, Cys-35–Cys-64, Cys-40–Cys-117, Cys-51–Cys-71, Cys-70–Cys-95, and Cys-77–Cys-88. 3 residues coordinate Ca(2+): Tyr-50, Gly-52, and His-55. His-74 is a catalytic residue. Asp-75 provides a ligand contact to Ca(2+). A Prevents secretion from ER motif is present at residues 144–147 (KTEL).

This sequence belongs to the phospholipase A2 family. It depends on Ca(2+) as a cofactor. As to expression, ubiquitous but expressed at a low level. Detected in vascular tissues and in the guard cells. Predominantly detected in pollen.

It localises to the secreted. It is found in the endoplasmic reticulum. The catalysed reaction is a 1,2-diacyl-sn-glycero-3-phosphocholine + H2O = a 1-acyl-sn-glycero-3-phosphocholine + a fatty acid + H(+). Inhibited by aristolochic acid. Functionally, PA2 catalyzes the calcium-dependent hydrolysis of the 2-acyl groups in 3-sn-phosphoglycerides. Releases lysophospholipids (LPLs) and free fatty acids (FFAs) from membrane phospholipids in response to hormones and other external stimuli. Regulates the process of cell elongation and plays important roles in shoot gravitropism by mediating auxin-induced cell elongation. Involved in stomatal opening in response to light. Plays a role in pollen development and germination and tube growth. This chain is Phospholipase A2-beta (PLA2-BETA), found in Arabidopsis thaliana (Mouse-ear cress).